The sequence spans 367 residues: Inositol-3-phosphate synthase (367 aa).

Aspartate 78, alanine 137, tyrosine 157, serine 200, aspartate 235, and lysine 248 together coordinate NAD(+).

Belongs to the myo-inositol 1-phosphate synthase family. The cofactor is NAD(+).

It catalyses the reaction D-glucose 6-phosphate = 1D-myo-inositol 3-phosphate. Its function is as follows. Key enzyme in myo-inositol biosynthesis pathway that catalyzes the conversion of glucose 6-phosphate to 1D-myo-inositol 3-phosphate in a NAD-dependent manner. This chain is Inositol-3-phosphate synthase (ino1), found in Mycobacterium tuberculosis (strain CDC 1551 / Oshkosh).